A 609-amino-acid polypeptide reads, in one-letter code: Aminopeptidase ltah-1.1 (609 aa).

Residues 137-139 (QCQ) and 268-273 (PFGGME) contribute to the substrate site. Residue H297 participates in Zn(2+) binding. E298 acts as the Proton acceptor in catalysis. H301 and E320 together coordinate Zn(2+). The Proton donor role is filled by Y387. 564 to 566 (RMK) contributes to the substrate binding site.

Belongs to the peptidase M1 family. Zn(2+) is required as a cofactor.

Its subcellular location is the cytoplasm. The enzyme catalyses Release of N-terminal Arg and Lys from oligopeptides when P1' is not Pro. Also acts on arylamides of Arg and Lys.. In terms of biological role, aminopeptidase which preferentially removes N-terminal Arg and Lys residues from peptides and proteins. The sequence is that of Aminopeptidase ltah-1.1 from Caenorhabditis elegans.